The chain runs to 425 residues: Adenosylhomocysteinase (425 aa).

Positions 60, 132, and 157 each coordinate substrate. 158–160 lines the NAD(+) pocket; sequence TTT. Substrate-binding residues include lysine 187 and aspartate 191. Residues asparagine 192, 221 to 226, glutamate 244, asparagine 279, 300 to 302, and asparagine 347 contribute to the NAD(+) site; these read GYGWCG and SGH.

Belongs to the adenosylhomocysteinase family. NAD(+) is required as a cofactor.

The protein localises to the cytoplasm. The enzyme catalyses S-adenosyl-L-homocysteine + H2O = L-homocysteine + adenosine. It functions in the pathway amino-acid biosynthesis; L-homocysteine biosynthesis; L-homocysteine from S-adenosyl-L-homocysteine: step 1/1. May play a key role in the regulation of the intracellular concentration of adenosylhomocysteine. This chain is Adenosylhomocysteinase, found in Nostoc sp. (strain PCC 7120 / SAG 25.82 / UTEX 2576).